The sequence spans 67 residues: Sodium channel neurotoxin MeuNaTxalpha-10 (67 aa).

The 65-residue stretch at 2-66 (RDGYIAKPHN…VPIRIPGKCH (65 aa)) folds into the LCN-type CS-alpha/beta domain. Disulfide bonds link Cys12–Cys65, Cys16–Cys38, Cys24–Cys48, and Cys28–Cys50. Residue Arg67 is a propeptide, removed by a carboxypeptidase.

The protein belongs to the long (4 C-C) scorpion toxin superfamily. Sodium channel inhibitor family. Alpha subfamily. As to expression, expressed by the venom gland.

The protein localises to the secreted. Its function is as follows. Alpha toxins bind voltage-independently at site-3 of sodium channels (Nav) and inhibit the inactivation of the activated channels, thereby blocking neuronal transmission. The polypeptide is Sodium channel neurotoxin MeuNaTxalpha-10 (Mesobuthus eupeus (Lesser Asian scorpion)).